Consider the following 558-residue polypeptide: Ribonuclease J (558 aa).

Positions 81, 83, 85, 86, 148, and 170 each coordinate Zn(2+). Residue 371-375 (HVSGH) participates in substrate binding. Zn(2+) is bound at residue H397.

The protein belongs to the metallo-beta-lactamase superfamily. RNA-metabolizing metallo-beta-lactamase-like family. Bacterial RNase J subfamily. In terms of assembly, homodimer. Zn(2+) serves as cofactor.

Its subcellular location is the cytoplasm. In terms of biological role, an RNase that has endonuclease and 5'-3' exonuclease activity. The 5'-exonuclease activity acts on 5'-monophosphate but not 5'-triphosphate ends. Endonuclease activity can cleave within 4 nucleotides of the 5'-end of a triphosphorylated RNA. Plays the major role in pre-23S rRNA maturation, and a minor role in processing of pre-5S and pre-16S rRNA. This Mycolicibacterium smegmatis (strain ATCC 700084 / mc(2)155) (Mycobacterium smegmatis) protein is Ribonuclease J.